A 922-amino-acid polypeptide reads, in one-letter code: GPI inositol-deacylase (922 aa).

Residues 1–11 lie on the Cytoplasmic side of the membrane; the sequence is MFLHSVNLWNL. The helical transmembrane segment at 12–32 threads the bilayer; it reads AFYVFMVFLATLGLWDVFFGF. The Lumenal portion of the chain corresponds to 33-597; sequence EENKCSMSYM…GQVVRFHGGA (565 aa). The active site involves serine 174. N-linked (GlcNAc...) asparagine glycosylation is found at asparagine 363, asparagine 402, and asparagine 558. Residues 598–618 form a helical membrane-spanning segment; it reads LPAYVVSSILLAYGGQLYSLL. Topologically, residues 619-641 are cytoplasmic; sequence STGYCLEYSTILDKEAKPYKVDP. A helical membrane pass occupies residues 642 to 662; sequence FVIMIKFLLGYKWFKELWDAV. The Lumenal portion of the chain corresponds to 663-668; it reads LLPELD. The helical transmembrane segment at 669–689 threads the bilayer; that stretch reads AIVLTSQSMCFPLVSLILFLF. Over 690–694 the chain is Cytoplasmic; the sequence is GTCTA. The helical transmembrane segment at 695-715 threads the bilayer; it reads YWSGLLSSTSVQLLSSLWLAL. Over 716–733 the chain is Lumenal; it reads KRPAELPKDIKVMSPDLP. A helical membrane pass occupies residues 734–754; sequence VLTVVFLIVSWTTCGALAILL. Residues 755 to 817 lie on the Cytoplasmic side of the membrane; sequence SYLYYVFKVV…DAEDSLRMHS (63 aa). Positions 776–798 are disordered; the sequence is NQPVNPKHSRRSEKKSNHHKDSA. The span at 782 to 793 shows a compositional bias: basic residues; it reads KHSRRSEKKSNH. A helical transmembrane segment spans residues 818 to 838; the sequence is TVINLLTWVVLLSMPSLIYWL. Residues 839-894 are Lumenal-facing; sequence KNLRYYFKLSPDPCKPLAFLLIPAIAILGNTHTVSVKSSKLLKTVSQFPLPLAVGV. A helical transmembrane segment spans residues 895 to 915; sequence IAFGSSHLYRVPCFVIIPLVF. The Cytoplasmic portion of the chain corresponds to 916-922; sequence HALCNFM.

This sequence belongs to the GPI inositol-deacylase family.

The protein localises to the endoplasmic reticulum membrane. In terms of biological role, GPI inositol-deacylase that catalyzes the remove of the acyl chain linked to the 2-OH position of inositol ring from the GPI-anchored protein (GPI-AP) in the endoplasmic reticulum. Initiates the post-attachment remodeling phase of GPI-AP biogenesis and participates in endoplasmic reticulum (ER)-to-Golgi transport of GPI-anchored protein. This chain is GPI inositol-deacylase, found in Mus musculus (Mouse).